The primary structure comprises 216 residues: Sarcospan (216 aa).

The Cytoplasmic portion of the chain corresponds to 1–26 (MGRKPSPRAQELPEEEARTCCGCRFP). A helical transmembrane segment spans residues 27–47 (LLLALLQLALGIAVTVLGFLM). Topologically, residues 48 to 59 (ASISPSLLVRDT) are extracellular. Residues 60-80 (PFWAGSIVCVVAYLGLFMLCV) form a helical membrane-spanning segment. Over 81-95 (SYQVDERTCVQFSMK) the chain is Cytoplasmic. Residues 96–116 (VFYFLLSALGLMVCMLAVAFA) traverse the membrane as a helical segment. The Extracellular segment spans residues 117–166 (AHHYSLLAQFTCETSLDSCQCKLPSSEPLSRAFVYRDVTDCTSVTGTFKL). A helical transmembrane segment spans residues 167–187 (FLIIQMVLNLVCGLVCLLACF). Residues 188–216 (VMWKHRYQVFYVGVGLRSLMASDGQLPKA) are Cytoplasmic-facing.

Its subcellular location is the cell membrane. It is found in the sarcolemma. The protein resides in the postsynaptic cell membrane. Functionally, component of the dystrophin-glycoprotein complex (DGC), a complex that spans the muscle plasma membrane and forms a link between the F-actin cytoskeleton and the extracellular matrix. Preferentially associates with the sarcoglycan subcomplex of the DGC. This chain is Sarcospan (Sspn), found in Mus musculus (Mouse).